Consider the following 346-residue polypeptide: Glucose-6-phosphatase 3 (346 aa).

The Lumenal portion of the chain corresponds to 1 to 24 (MESTLGAGIAMAEALQNQLPWLEN). Residues 25-45 (VWLWVTFLGDPKSLFLFYFPA) traverse the membrane as a helical segment. Topologically, residues 46 to 54 (AYYASRRVG) are cytoplasmic. The chain crosses the membrane as a helical span at residues 55–75 (IAVLWISLITEWLNLVFKWFL). The Lumenal segment spans residues 76–108 (FGDRPFWWVHESGYYSQAPAQVHQFPSSCETGP). A substrate-binding site is contributed by arginine 79. Residues 109-129 (GSPSGHCMITGAALWPIMTAV) traverse the membrane as a helical segment. Histidine 114 acts as the Proton donor in catalysis. Topologically, residues 130 to 140 (SSQMATRAHSR) are cytoplasmic. Residues 141 to 162 (WVRVIPSLAYCTFLLAVGLSRV) traverse the membrane as a helical segment. Position 161 (arginine 161) interacts with substrate. Residues 163–167 (FLLAH) lie on the Lumenal side of the membrane. Histidine 167 acts as the Nucleophile in catalysis. Residues 168–186 (FPHQVLAGLITGAVLGWLM) traverse the membrane as a helical segment. Over 187-197 (TPQVPMERELS) the chain is Cytoplasmic. Residues 198–218 (FYGLTSLALLLGASLIYWTLF) form a helical membrane-spanning segment. Topologically, residues 219–254 (TLGLDLSWSINLASKWCERPEWVHLDSRPFASLSRD) are lumenal. The helical transmembrane segment at 255–273 (SGAALGLGIALHSPCYAQV) threads the bilayer. At 274–283 (RRAHLGYGQK) the chain is on the cytoplasmic side. The helical transmembrane segment at 284–304 (LVCLVLAMGLLGPLNWLGYPP) threads the bilayer. At 305–307 (QIS) the chain is on the lumenal side. A helical transmembrane segment spans residues 308 to 328 (LFYIFNFLKYTLWPCLVLALV). Topologically, residues 329–346 (PWLVHMFSAQEAPPIRSS) are cytoplasmic.

This sequence belongs to the glucose-6-phosphatase family.

The protein localises to the endoplasmic reticulum membrane. It carries out the reaction D-glucose 6-phosphate + H2O = D-glucose + phosphate. Its pathway is carbohydrate biosynthesis; gluconeogenesis. Its activity is regulated as follows. Inhibited by vanadate. In terms of biological role, hydrolyzes glucose-6-phosphate to glucose in the endoplasmic reticulum. May form with the glucose-6-phosphate transporter (SLC37A4/G6PT) a ubiquitously expressed complex responsible for glucose production through glycogenolysis and gluconeogenesis. Probably required for normal neutrophil function. This chain is Glucose-6-phosphatase 3 (G6PC3), found in Bos taurus (Bovine).